The following is a 553-amino-acid chain: Cytochrome P450 86A22 (553 aa).

A helical transmembrane segment spans residues 8–24 (MIVAIVAAYLLWFKSIT). Residue cysteine 459 participates in heme binding.

The protein belongs to the cytochrome P450 family. It depends on heme as a cofactor. As to expression, mostly expressed in the developing stigma of floral buds. Weakly detected in leaves, stems and flowers.

Its subcellular location is the membrane. The enzyme catalyses (9Z)-octadecenoyl-CoA + reduced [NADPH--hemoprotein reductase] + O2 = (9Z)-18-hydroxyoctadecenoyl-CoA + oxidized [NADPH--hemoprotein reductase] + H2O + H(+). It carries out the reaction (9Z,12Z)-octadecadienoyl-CoA + reduced [NADPH--hemoprotein reductase] + O2 = (9Z,12Z)-18-hydroxyoctadecadienoyl-CoA + oxidized [NADPH--hemoprotein reductase] + H2O + H(+). Its function is as follows. Fatty acyl-CoA omega-hydroxylase essential for the production of omega-hydroxy fatty acids and the biosynthesis of triacylglycerol-/diacylglycerol-based estolide polyesters in the stigma. Substrate preference is 16:0-CoA &gt; 18:1-CoA &gt; 18:0-CoA. The sequence is that of Cytochrome P450 86A22 from Petunia hybrida (Petunia).